We begin with the raw amino-acid sequence, 303 residues long: MLDVCLLGCGGSMPIPDRNLTAMIVSYQGRKLLIDCGEGTQVSLKILGWKIRNIDVILFTHFHADHIAGLPGLLLTIANSGRLEPITIIGPYGLIKIVMGLKVIAPVLPYSIELVELHGKEKYFQKIGYFNINILSVDHGIPCFAYSIDVQRNRKFDREKALKNKVPLIFWSKLQKGEEIKQRDKLYTPDMVLGYGRRGLKISYCTDSRPSRELVEFVKKSDVFICEGMYGDDEKKHKAISYKHMIFSEAAVIAKEAEVEELWLTHFSPSLIEPQAYIENAKNIFKNTIIGQDRYVKSINFKE.

H61, H63, D65, H66, H139, D207, and H266 together coordinate Zn(2+). D65 functions as the Proton acceptor in the catalytic mechanism.

This sequence belongs to the RNase Z family. As to quaternary structure, homodimer. Requires Zn(2+) as cofactor.

It catalyses the reaction Endonucleolytic cleavage of RNA, removing extra 3' nucleotides from tRNA precursor, generating 3' termini of tRNAs. A 3'-hydroxy group is left at the tRNA terminus and a 5'-phosphoryl group is left at the trailer molecule.. Zinc phosphodiesterase, which displays some tRNA 3'-processing endonuclease activity. Probably involved in tRNA maturation, by removing a 3'-trailer from precursor tRNA. The polypeptide is Ribonuclease Z (Clostridium kluyveri (strain ATCC 8527 / DSM 555 / NBRC 12016 / NCIMB 10680 / K1)).